Here is a 161-residue protein sequence, read N- to C-terminus: Allophycocyanin alpha chain (161 aa).

An N4-methylasparagine modification is found at Asn-71. Residue Cys-81 participates in (2R,3E)-phycocyanobilin binding.

This sequence belongs to the phycobiliprotein family. As to quaternary structure, component of the phycobilisome. Heterodimer of an alpha and a beta chain. Contains one covalently linked phycocyanobilin chromophore.

The protein localises to the cellular thylakoid membrane. Light-harvesting photosynthetic bile pigment-protein from the phycobiliprotein complex. Allophycocyanin has a maximum absorption at approximately 650 nanometers. This chain is Allophycocyanin alpha chain (apcA), found in Arthrospira platensis (Spirulina platensis).